The following is a 147-amino-acid chain: Large ribosomal subunit protein bL9 (147 aa).

It belongs to the bacterial ribosomal protein bL9 family.

Binds to the 23S rRNA. This is Large ribosomal subunit protein bL9 from Trichlorobacter lovleyi (strain ATCC BAA-1151 / DSM 17278 / SZ) (Geobacter lovleyi).